A 327-amino-acid chain; its full sequence is Zinc transport protein ZntB (327 aa).

Residues 1–273 (MEAIKGSDVN…ARRTYTMSLM (273 aa)) lie on the Cytoplasmic side of the membrane. Residues 274–294 (AMVFLPSTFLTGLFGVNLGGI) form a helical membrane-spanning segment. Over 295-300 (PGGGWQ) the chain is Periplasmic. A helical transmembrane segment spans residues 301-321 (FGFSIFCILLVVLIGGVALWL). The Cytoplasmic portion of the chain corresponds to 322–327 (HRSKWL).

This sequence belongs to the CorA metal ion transporter (MIT) (TC 1.A.35) family.

The protein resides in the cell inner membrane. The enzyme catalyses Zn(2+)(out) + H(+)(out) = Zn(2+)(in) + H(+)(in). In terms of biological role, zinc transporter. Acts as a Zn(2+):proton symporter, which likely mediates zinc ion uptake. This Escherichia coli O6:K15:H31 (strain 536 / UPEC) protein is Zinc transport protein ZntB.